A 246-amino-acid polypeptide reads, in one-letter code: NAD-dependent protein deacylase (246 aa).

Positions 1 to 245 constitute a Deacetylase sirtuin-type domain; the sequence is MKEFITKHRD…ELIREILDNP (245 aa). 20 to 39 contacts NAD(+); the sequence is GAGISAESGIPTFRGSEGLW. Positions 64 and 67 each coordinate substrate. 98–101 contributes to the NAD(+) binding site; that stretch reads QNVD. His-116 (proton acceptor) is an active-site residue. Residues Cys-124, Cys-127, Cys-146, and Cys-149 each coordinate Zn(2+). NAD(+) contacts are provided by residues 186 to 188, 212 to 214, and Thr-230; these read GTS and NPE.

This sequence belongs to the sirtuin family. Class III subfamily. The cofactor is Zn(2+).

Its subcellular location is the cytoplasm. It catalyses the reaction N(6)-acetyl-L-lysyl-[protein] + NAD(+) + H2O = 2''-O-acetyl-ADP-D-ribose + nicotinamide + L-lysyl-[protein]. The enzyme catalyses N(6)-succinyl-L-lysyl-[protein] + NAD(+) + H2O = 2''-O-succinyl-ADP-D-ribose + nicotinamide + L-lysyl-[protein]. Its function is as follows. NAD-dependent lysine deacetylase and desuccinylase that specifically removes acetyl and succinyl groups on target proteins. Modulates the activities of several proteins which are inactive in their acylated form. The sequence is that of NAD-dependent protein deacylase from Leptospira interrogans serogroup Icterohaemorrhagiae serovar Lai (strain 56601).